Consider the following 204-residue polypeptide: Large ribosomal subunit protein eL15z (204 aa).

It belongs to the eukaryotic ribosomal protein eL15 family.

In Picea mariana (Black spruce), this protein is Large ribosomal subunit protein eL15z (SB61).